Consider the following 109-residue polypeptide: Cyclic di-AMP receptor A (109 aa).

Residues Thr21, Phe25, Thr28, Gly35, Phe36, Leu37, Asn41, Gly47, Glu92, and Gly94 each coordinate 3',3'-c-di-AMP.

As to quaternary structure, homotrimer.

It is found in the cytoplasm. In terms of biological role, binds cyclic di-AMP (c-di-AMP) and is probably involved in c-di-AMP-mediated signaling pathways. In vitro, can also bind cyclic GMP-AMP (3'3'-cGAMP), with lower affinity, but not c-di-GMP or 2'3'-cGAMP. This chain is Cyclic di-AMP receptor A, found in Bacillus subtilis (strain 168).